Reading from the N-terminus, the 500-residue chain is UBX domain-containing protein 5 (500 aa).

Positions 50–61 are enriched in low complexity; it reads SNNTPTPSNSTP. Residues 50–70 form a disordered region; the sequence is SNNTPTPSNSTPMAPTSVDSD. The residue at position 139 (S139) is a Phosphoserine. Disordered stretches follow at residues 142-169 and 371-399; these read NQRL…EEND and ESLN…QEPD. Over residues 148-161 the composition is skewed to low complexity; it reads TNTNTYINDNSSDS. In terms of domain architecture, UBX spans 415-493; it reads KPGITTRIQI…GLKNSSLLLE (79 aa).

As to quaternary structure, interacts with CDC48.

Its subcellular location is the nucleus. It localises to the cytoplasm. Functionally, involved in CDC48-dependent protein degradation through the ubiquitin/proteasome pathway. The chain is UBX domain-containing protein 5 (UBX5) from Saccharomyces cerevisiae (strain ATCC 204508 / S288c) (Baker's yeast).